The chain runs to 333 residues: Ketol-acid reductoisomerase (NADP(+)) (333 aa).

The 181-residue stretch at 2 to 182 (AELFYDADAD…GGTRAGVIKT (181 aa)) folds into the KARI N-terminal Rossmann domain. NADP(+)-binding positions include 25–28 (YGSQ), Ser51, Ser53, and 83–86 (DPIQ). His108 is an active-site residue. Gly134 contributes to the NADP(+) binding site. One can recognise a KARI C-terminal knotted domain in the interval 183-328 (TFTEETETDL…KELRKLMSWV (146 aa)). Mg(2+) is bound by residues Asp191, Glu195, Glu227, and Glu231. Substrate is bound at residue Ser252.

This sequence belongs to the ketol-acid reductoisomerase family. Requires Mg(2+) as cofactor.

The catalysed reaction is (2R)-2,3-dihydroxy-3-methylbutanoate + NADP(+) = (2S)-2-acetolactate + NADPH + H(+). The enzyme catalyses (2R,3R)-2,3-dihydroxy-3-methylpentanoate + NADP(+) = (S)-2-ethyl-2-hydroxy-3-oxobutanoate + NADPH + H(+). Its pathway is amino-acid biosynthesis; L-isoleucine biosynthesis; L-isoleucine from 2-oxobutanoate: step 2/4. It participates in amino-acid biosynthesis; L-valine biosynthesis; L-valine from pyruvate: step 2/4. In terms of biological role, involved in the biosynthesis of branched-chain amino acids (BCAA). Catalyzes an alkyl-migration followed by a ketol-acid reduction of (S)-2-acetolactate (S2AL) to yield (R)-2,3-dihydroxy-isovalerate. In the isomerase reaction, S2AL is rearranged via a Mg-dependent methyl migration to produce 3-hydroxy-3-methyl-2-ketobutyrate (HMKB). In the reductase reaction, this 2-ketoacid undergoes a metal-dependent reduction by NADPH to yield (R)-2,3-dihydroxy-isovalerate. The sequence is that of Ketol-acid reductoisomerase (NADP(+)) from Streptomyces avermitilis (strain ATCC 31267 / DSM 46492 / JCM 5070 / NBRC 14893 / NCIMB 12804 / NRRL 8165 / MA-4680).